The primary structure comprises 578 residues: Tetratricopeptide repeat protein ttc-39B (578 aa).

3 TPR repeats span residues 297–330 (AIML…QDVY), 481–514 (CLYY…ESSI), and 522–554 (PNAT…YKSY).

The sequence is that of Tetratricopeptide repeat protein ttc-39B from Caenorhabditis elegans.